The chain runs to 501 residues: Beta-secretase 1 (501 aa).

Residues 1 to 21 (MAQALPWLLLWMGAGVLPAHG) form the signal peptide. Residues 22–45 (TQHGIRLPLRSGLGGAPLGLRLPR) constitute a propeptide that is removed on maturation. At 22–457 (TQHGIRLPLR…PQTDESTLMT (436 aa)) the chain is on the extracellular side. The interval 39–58 (LGLRLPRETDEEPEEPGRRG) is disordered. The Peptidase A1 domain occupies 75-416 (YYVEMTVGSP…DRARKRIGFA (342 aa)). Residue Asp-93 is part of the active site. Lys-126 carries the N6-acetyllysine modification. N-linked (GlcNAc...) asparagine glycans are attached at residues Asn-153, Asn-172, and Asn-223. 3 disulfide bridges follow: Cys-216/Cys-420, Cys-278/Cys-443, and Cys-330/Cys-380. N6-acetyllysine occurs at positions 275, 279, and 285. The active site involves Asp-289. Residues Lys-299, Lys-300, and Lys-307 each carry the N6-acetyllysine modification. Asn-354 carries an N-linked (GlcNAc...) asparagine glycan. A helical membrane pass occupies residues 458–478 (IAYVMAAICALFMLPLCLMVC). S-palmitoyl cysteine attachment occurs at residues Cys-474, Cys-478, Cys-482, and Cys-485. Residues 479–501 (QWRCLRCLRQQHDDFADDISLLK) are Cytoplasmic-facing. The tract at residues 479-501 (QWRCLRCLRQQHDDFADDISLLK) is interaction with RTN3. Positions 496–500 (DISLL) match the DXXLL motif. Residue Ser-498 is modified to Phosphoserine. A Glycyl lysine isopeptide (Lys-Gly) (interchain with G-Cter in ubiquitin) cross-link involves residue Lys-501.

The protein belongs to the peptidase A1 family. Monomer. Interacts (via DXXLL motif) with GGA1, GGA2 and GGA3 (via their VHS domain); the interaction highly increases when BACE1 is phosphorylated at Ser-498. Interacts with RTN1; RTN2; RTN3 and RTN4; the interaction leads to inhibition of amyloid precursor protein processing. Interacts with SNX6. Interacts with PCSK9. Interacts with NAT8 and NAT8B. Interacts with BIN1. Interacts (via extracellular domain) with ADAM10 (via extracellular domain). Interacts with SORL1; this interaction may affect binding with APP and hence reduce APP cleavage. Interacts with NRDC AND NRG1. In terms of processing, N-Glycosylated. Addition of a bisecting N-acetylglucosamine by MGAT3 blocks lysosomal targeting, further degradation and is required for maintaining stability under stress conditions. Acetylated in the endoplasmic reticulum at Lys-126, Lys-275, Lys-279, Lys-285, Lys-299, Lys-300 and Lys-307. Acetylation by NAT8 and NAT8B is transient and deacetylation probably occurs in the Golgi. Acetylation regulates the maturation, the transport to the plasma membrane, the stability and the expression of the protein. Post-translationally, palmitoylation mediates lipid raft localization. In terms of processing, ubiquitinated at Lys-501, ubiquitination leads to lysosomal degradation. Monoubiquitinated and 'Lys-63'-linked polyubitinated. Deubiquitnated by USP8; inhibits lysosomal degradation. Phosphorylation at Ser-498 is required for interaction with GGA1 and retrograded transport from endosomal compartments to the trans-Golgi network. Non-phosphorylated BACE1 enters a direct recycling route to the cell surface. As to expression, expressed at high levels in the brain and pancreas. In the brain, expression is highest in the substantia nigra, locus coruleus and medulla oblongata.

It localises to the cell membrane. The protein localises to the golgi apparatus. The protein resides in the trans-Golgi network. It is found in the endoplasmic reticulum. Its subcellular location is the endosome. It localises to the cell surface. The protein localises to the cytoplasmic vesicle membrane. The protein resides in the membrane raft. It is found in the lysosome. Its subcellular location is the late endosome. It localises to the early endosome. The protein localises to the recycling endosome. The protein resides in the cell projection. It is found in the axon. Its subcellular location is the dendrite. The enzyme catalyses Broad endopeptidase specificity. Cleaves Glu-Val-Asn-Leu-|-Asp-Ala-Glu-Phe in the Swedish variant of Alzheimer's amyloid precursor protein.. Its activity is regulated as follows. Inhibited by RTN3 and RTN4. Responsible for the proteolytic processing of the amyloid precursor protein (APP). Cleaves at the N-terminus of the A-beta peptide sequence, between residues 671 and 672 of APP, leads to the generation and extracellular release of beta-cleaved soluble APP, and a corresponding cell-associated C-terminal fragment which is later released by gamma-secretase. Cleaves CHL1. This is Beta-secretase 1 from Homo sapiens (Human).